The primary structure comprises 733 residues: Hypermethylated in cancer 1 protein (733 aa).

The BTB domain maps to 47 to 110 (CDVIIVVQNA…IYTGRLADGA (64 aa)). The interval 154 to 315 (KYCHLRGGGG…PFRGGSGSPG (162 aa)) is mediates HDAC-dependent transcriptional repression. Arg-159 carries the post-translational modification Omega-N-methylarginine. Positions 189–209 (YPSPVGPPPPPAAEPPSGPEA) are disordered. A compositionally biased stretch (pro residues) spans 192 to 206 (PVGPPPPPAAEPPSG). Phosphoserine is present on Ser-237. Positions 241 to 247 (GLDLSKK) are interaction with CTBP1. The tract at residues 241–421 (GLDLSKKSPP…PGGHLEGYPC (181 aa)) is disordered. Residue Ser-248 is modified to Phosphoserine. The segment covering 284-293 (LALPSLPPLP) has biased composition (pro residues). Lys-333 bears the N6-acetyllysine; alternate mark. Lys-333 is covalently cross-linked (Glycyl lysine isopeptide (Lys-Gly) (interchain with G-Cter in SUMO); alternate). Positions 344–361 (ELGRERGSPSERCEERGG) are enriched in basic and acidic residues. Ser-366 is subject to Phosphoserine. Residues 368 to 380 (GGPPLGLAPPPRY) are compositionally biased toward pro residues. C2H2-type zinc fingers lie at residues 439–459 (CIPC…VEAH), 509–529 (CASC…EKTH), 537–557 (CTIC…MRSH), 565–585 (CDAC…MRIH), and 593–613 (CQVC…MKMH). The residue at position 704 (Ser-704) is a Phosphoserine.

This sequence belongs to the krueppel C2H2-type zinc-finger protein family. Hic subfamily. As to quaternary structure, self-associates. Interacts with HIC2. Interacts with CTBP1 and CTBP2. Interacts with TCF7L2 and ARID1A. Interacts with MTA1 and MBD3; indicative for an association with the NuRD complex. Interacts with SIRT1. Post-translationally, acetylated on several residues, including Lys-333. Lys-333 is deacetylated by SIRT1. In terms of processing, sumoylated on Lys-333 by a PIAS family member, which enhances interaction with MTA1, positively regulates transcriptional repression activity and is enhanced by HDAC4. Ubiquitously expressed with highest levels found in lung, colon, prostate, thymus, testis and ovary. Expression is absent or decreased in many tumor cells.

Its subcellular location is the nucleus. Functionally, transcriptional repressor. Recognizes and binds to the consensus sequence '5-[CG]NG[CG]GGGCA[CA]CC-3'. May act as a tumor suppressor. Involved in development of head, face, limbs and ventral body wall. Involved in down-regulation of SIRT1 and thereby is involved in regulation of p53/TP53-dependent apoptotic DNA-damage responses. The specific target gene promoter association seems to be depend on corepressors, such as CTBP1 or CTBP2 and MTA1. In cooperation with MTA1 (indicative for an association with the NuRD complex) represses transcription from CCND1/cyclin-D1 and CDKN1C/p57Kip2 specifically in quiescent cells. Involved in regulation of the Wnt signaling pathway probably by association with TCF7L2 and preventing TCF7L2 and CTNNB1 association with promoters of TCF-responsive genes. Seems to repress transcription from E2F1 and ATOH1 which involves ARID1A, indicative for the participation of a distinct SWI/SNF-type chromatin-remodeling complex. Probably represses transcription of ACKR3, FGFBP1 and EFNA1. In Homo sapiens (Human), this protein is Hypermethylated in cancer 1 protein (HIC1).